The sequence spans 487 residues: GTPase Der (487 aa).

EngA-type G domains lie at 3–166 and 193–366; these read PVIA…PRDA and IKIA…KSAV. GTP contacts are provided by residues 9-16, 56-60, 118-121, 199-206, 246-250, and 311-314; these read GRPNVGKS, DTGGI, NKID, DTAGV, and NKWD. One can recognise a KH-like domain in the interval 367-451; sequence TRWPTSRLTQ…PIRIEYKGGE (85 aa). Over residues 448–461 the composition is skewed to basic and acidic residues; the sequence is KGGENPYEGKKNTL. The tract at residues 448-487 is disordered; sequence KGGENPYEGKKNTLTDRQVNKKRRLMSHHKKAEKKRRDKR. A compositionally biased stretch (basic residues) spans 467 to 487; the sequence is NKKRRLMSHHKKAEKKRRDKR.

The protein belongs to the TRAFAC class TrmE-Era-EngA-EngB-Septin-like GTPase superfamily. EngA (Der) GTPase family. In terms of assembly, associates with the 50S ribosomal subunit.

Its function is as follows. GTPase that plays an essential role in the late steps of ribosome biogenesis. This Pseudomonas putida (strain W619) protein is GTPase Der.